Consider the following 281-residue polypeptide: Voltage-dependent L-type calcium channel subunit alpha-1S (281 aa).

The stretch at 1-8 (VGFVIVTF) is one III repeat. Positions 1–17 (VGFVIVTFQEQGESEYK) are dihydropyridine binding. One copy of the IV repeat lies at 45 to 281 (NPYQYQIWYV…TCGTGFAYFY (237 aa)). The helical transmembrane segment at 59-80 (YFEYLMFFLIMLNTICLGMQHY) threads the bilayer. N-linked (GlcNAc...) asparagine glycosylation is present at Asn-81. A helical membrane pass occupies residues 89-110 (VSDILNVAFTVLFTLEMILKLM). Residues 121–140 (PWNVFDFLIVIGSIIDVILS) traverse the membrane as a helical segment. The chain crosses the membrane as a helical span at residues 153 to 171 (ITFFRLFRVMRLVKLLSRG). Residues 190–210 (YVALLIVMLFFIYAVIGMQMF) traverse the membrane as a helical segment. Positions 233–251 (AVLLLFRCATGEAWQEILL) form an intramembrane region, pore-forming. Residues 242-245 (TGEA) carry the Selectivity filter of repeat IV motif. A dihydropyridine binding region spans residues 258–281 (RCDPESDYAEGEEYTCGTGFAYFY). Cys-259 and Cys-273 form a disulfide bridge. The phenylalkylamine binding stretch occupies residues 270-281 (EYTCGTGFAYFY).

Belongs to the calcium channel alpha-1 subunit (TC 1.A.1.11) family. CACNA1S subfamily. Component of a calcium channel complex consisting of a pore-forming alpha subunit (CACNA1S) and the ancillary subunits CACNB1 or CACNB2, CACNG1 and CACNA2D1. The channel complex contains alpha, beta, gamma and delta subunits in a 1:1:1:1 ratio, i.e. it contains either CACNB1 or CACNB2. CACNA1S channel activity is modulated by the auxiliary subunits (CACNB1 or CACNB2, CACNG1 and CACNA2D1). Interacts with DYSF and JSRP1. Interacts with RYR1. Interacts with CALM. The alpha-1S subunit is found in two isoforms in the skeletal muscle: a minor form of 212 kDa containing the complete amino acid sequence, and a major form of 190 kDa derived from the full-length form by post-translational proteolysis close to Phe-1690. In terms of processing, both the minor and major forms are phosphorylated in vitro by PKA. Phosphorylation by PKA activates the calcium channel.

The protein resides in the cell membrane. It is found in the sarcolemma. It localises to the T-tubule. It catalyses the reaction Ca(2+)(in) = Ca(2+)(out). With respect to regulation, channel activity is blocked by dihydropyridines (DHP), phenylalkylamines, and by benzothiazepines. Functionally, pore-forming, alpha-1S subunit of the voltage-gated calcium channel that gives rise to L-type calcium currents in skeletal muscle. Calcium channels containing the alpha-1S subunit play an important role in excitation-contraction coupling in skeletal muscle via their interaction with RYR1, which triggers Ca(2+) release from the sarcplasmic reticulum and ultimately results in muscle contraction. Long-lasting (L-type) calcium channels belong to the 'high-voltage activated' (HVA) group. The protein is Voltage-dependent L-type calcium channel subunit alpha-1S (CACNA1S) of Gallus gallus (Chicken).